Here is a 269-residue protein sequence, read N- to C-terminus: Small ribosomal subunit protein eS1 (269 aa).

A disordered region spans residues 1–20 (MAVGKNKGVSKGGKKGSKKK).

This sequence belongs to the eukaryotic ribosomal protein eS1 family. As to quaternary structure, component of the small ribosomal subunit. Mature ribosomes consist of a small (40S) and a large (60S) subunit. The 40S subunit contains about 33 different proteins and 1 molecule of RNA (18S). The 60S subunit contains about 49 different proteins and 3 molecules of RNA (28S, 5.8S and 5S).

It localises to the cytoplasm. Functionally, has an essential role in oogenesis. This chain is Small ribosomal subunit protein eS1, found in Anopheles gambiae (African malaria mosquito).